Reading from the N-terminus, the 353-residue chain is Probable dual-specificity RNA methyltransferase RlmN (353 aa).

Glu-95 acts as the Proton acceptor in catalysis. In terms of domain architecture, Radical SAM core spans 103–333 (DGGRKTICIS…PILNRRSPGR (231 aa)). An intrachain disulfide couples Cys-110 to Cys-339. [4Fe-4S] cluster is bound by residues Cys-117, Cys-121, and Cys-124. S-adenosyl-L-methionine contacts are provided by residues 164–165 (GE), Ser-196, 219–221 (SLN), and Asn-296. Cys-339 (S-methylcysteine intermediate) is an active-site residue.

It belongs to the radical SAM superfamily. RlmN family. [4Fe-4S] cluster serves as cofactor.

The protein resides in the cytoplasm. It catalyses the reaction adenosine(2503) in 23S rRNA + 2 reduced [2Fe-2S]-[ferredoxin] + 2 S-adenosyl-L-methionine = 2-methyladenosine(2503) in 23S rRNA + 5'-deoxyadenosine + L-methionine + 2 oxidized [2Fe-2S]-[ferredoxin] + S-adenosyl-L-homocysteine. It carries out the reaction adenosine(37) in tRNA + 2 reduced [2Fe-2S]-[ferredoxin] + 2 S-adenosyl-L-methionine = 2-methyladenosine(37) in tRNA + 5'-deoxyadenosine + L-methionine + 2 oxidized [2Fe-2S]-[ferredoxin] + S-adenosyl-L-homocysteine. Specifically methylates position 2 of adenine 2503 in 23S rRNA and position 2 of adenine 37 in tRNAs. The sequence is that of Probable dual-specificity RNA methyltransferase RlmN from Leptospira biflexa serovar Patoc (strain Patoc 1 / Ames).